Here is a 291-residue protein sequence, read N- to C-terminus: Putative transport permease ycf38 (291 aa).

A run of 6 helical transmembrane segments spans residues 47 to 67 (ATLM…GGLF), 87 to 107 (SGII…PLMF), 135 to 155 (FMTC…LFMG), 165 to 185 (LIFA…SLAL), 195 to 215 (LLAL…ALAP), and 262 to 282 (ISLG…AYIV). Residues 47–289 (ATLMAGIIQP…YIVSNILKAR (243 aa)) form the ABC transmembrane type-2 domain.

Belongs to the ABC-2 integral membrane protein family.

It is found in the plastid. The protein localises to the chloroplast membrane. The polypeptide is Putative transport permease ycf38 (ycf38) (Porphyra purpurea (Red seaweed)).